Consider the following 2627-residue polypeptide: Telomerase protein component 1 (2627 aa).

TEP1 N-terminal repeat units lie at residues 1 to 30 (MEKL…DLQP), 31 to 60 (LEKL…DLKT), 61 to 90 (MEKP…DLKT), and 91 to 120 (MEKP…SLKS). 2 disordered regions span residues 193–214 (FDSE…SLGE) and 383–402 (RKHR…GMEP). The TROVE domain occupies 223-676 (VKLTSGDSES…VKHSLPLLPG (454 aa)). Residues 383-395 (RKHRAKRHPRRPP) are compositionally biased toward basic residues. Residues 1162-1490 (RLSLVTGQSG…PLERPGARLC (329 aa)) enclose the NACHT domain. An ATP-binding site is contributed by 1168–1175 (GQSGQGKT). 19 WD repeats span residues 1411-1448 (VLPQ…TKSW), 1674-1713 (AVSS…EEKS), 1716-1754 (SGCD…RVLQ), 1757-1796 (AHQY…LAFQ), 1798-1837 (TYPK…VTKD), 1840-1879 (APGA…RLAA), 1882-1921 (AHHG…PRGH), 1925-1964 (LSLS…QGAQ), 1967-2005 (ALDV…LQSL), 2008-2047 (LSRF…RPHK), 2059-2098 (GHEG…TPVL), 2105-2143 (CHRD…RLGQ), 2146-2183 (GHQS…LTSI), 2185-2233 (AHSG…QTHT), 2236-2275 (GHSG…DDTC), 2278-2317 (RSSA…ATAQ), 2319-2355 (PGHI…GSAP), 2368-2417 (EDLG…PMIL), and 2459-2500 (NPSR…GEWT). The segment covering 2506–2522 (QKKANTPETQTPGTDPS) has biased composition (polar residues). Residues 2506–2551 (QKKANTPETQTPGTDPSTCRESDASMDSDASMDSEPTPHLKTRQRR) form a disordered region. WD repeat units follow at residues 2553–2590 (IHSG…LLGL) and 2592–2626 (RCEG…FLNW).

Associated component of the telomerase holoenzyme complex. Component of the vault ribonucleoprotein particle, at least composed of MVP, PARP4 and one or more vault RNAs (vRNAs). Binds to VAULTRC1, VAULTRC2 and VAULTRC4/hvg4 vRNAs. In terms of tissue distribution, ubiquitous.

It is found in the nucleus. Its subcellular location is the chromosome. The protein localises to the telomere. Component of the telomerase ribonucleoprotein complex that is essential for the replication of chromosome termini. Also a component of the ribonucleoprotein vaults particle, a multi-subunit structure involved in nucleo-cytoplasmic transport. Responsible for the localizing and stabilizing vault RNA (vRNA) association in the vault ribonucleoprotein particle. Binds to TERC. This chain is Telomerase protein component 1 (TEP1), found in Homo sapiens (Human).